An 82-amino-acid chain; its full sequence is Small ribosomal subunit protein bS18 (82 aa).

Residues 1–25 (MADTSSSQARRPFHRRRKTCPFSGA) are disordered.

This sequence belongs to the bacterial ribosomal protein bS18 family. In terms of assembly, part of the 30S ribosomal subunit. Forms a tight heterodimer with protein bS6.

Its function is as follows. Binds as a heterodimer with protein bS6 to the central domain of the 16S rRNA, where it helps stabilize the platform of the 30S subunit. This is Small ribosomal subunit protein bS18 from Agrobacterium fabrum (strain C58 / ATCC 33970) (Agrobacterium tumefaciens (strain C58)).